The primary structure comprises 177 residues: Large ribosomal subunit protein uL6 (177 aa).

This sequence belongs to the universal ribosomal protein uL6 family. Part of the 50S ribosomal subunit.

Its function is as follows. This protein binds to the 23S rRNA, and is important in its secondary structure. It is located near the subunit interface in the base of the L7/L12 stalk, and near the tRNA binding site of the peptidyltransferase center. The chain is Large ribosomal subunit protein uL6 from Roseobacter denitrificans (strain ATCC 33942 / OCh 114) (Erythrobacter sp. (strain OCh 114)).